Here is a 152-residue protein sequence, read N- to C-terminus: uncharacterized protein (152 aa).

N2 carries N-linked (GlcNAc...) asparagine; by host glycosylation. Helical transmembrane passes span 5-25, 36-56, and 68-88; these read MILL…MNLW, LNDF…CYIL, and LIIT…QAFI. The N-linked (GlcNAc...) asparagine; by host glycan is linked to N113.

Its subcellular location is the membrane. This is an uncharacterized protein from Acanthamoeba polyphaga mimivirus (APMV).